Here is a 666-residue protein sequence, read N- to C-terminus: tRNA 5-methylaminomethyl-2-thiouridine biosynthesis bifunctional protein MnmC (666 aa).

Residues 1–245 (MKQYAIQPAT…KREMLCGVME (245 aa)) are tRNA (mnm(5)s(2)U34)-methyltransferase. An FAD-dependent cmnm(5)s(2)U34 oxidoreductase region spans residues 270 to 666 (IGGGIASALL…RKLLKGKAVK (397 aa)).

This sequence in the N-terminal section; belongs to the methyltransferase superfamily. tRNA (mnm(5)s(2)U34)-methyltransferase family. It in the C-terminal section; belongs to the DAO family. It depends on FAD as a cofactor.

It localises to the cytoplasm. The catalysed reaction is 5-aminomethyl-2-thiouridine(34) in tRNA + S-adenosyl-L-methionine = 5-methylaminomethyl-2-thiouridine(34) in tRNA + S-adenosyl-L-homocysteine + H(+). Functionally, catalyzes the last two steps in the biosynthesis of 5-methylaminomethyl-2-thiouridine (mnm(5)s(2)U) at the wobble position (U34) in tRNA. Catalyzes the FAD-dependent demodification of cmnm(5)s(2)U34 to nm(5)s(2)U34, followed by the transfer of a methyl group from S-adenosyl-L-methionine to nm(5)s(2)U34, to form mnm(5)s(2)U34. The sequence is that of tRNA 5-methylaminomethyl-2-thiouridine biosynthesis bifunctional protein MnmC from Salmonella typhi.